Here is an 88-residue protein sequence, read N- to C-terminus: Arminin 1b (88 aa).

Residues 1-18 form the signal peptide; the sequence is MKTVLAFLFLTFIAFTHA. The propeptide occupies 19–57; it reads ESYEDVKEEIKNEVEREIFEDLEEESDVLESNVRELNDA. Val-85 is subject to Valine amide.

Belongs to the arminin family. In terms of tissue distribution, expressed in entodermal epithelium along the body column.

It localises to the secreted. The protein resides in the target cell membrane. In terms of biological role, antimicrobial peptide with a broad-spectrum antimicrobial activity. Keeps its antibacterial activity under a wide range of salt concentrations that mimic physiological conditions of human blood, which is surprising, since Hydra is an obligate freshwater animal with nearly no salt tolerance. Does not affect red blood cells. The protein is Arminin 1b of Hydra vulgaris (Hydra).